Reading from the N-terminus, the 107-residue chain is UPF0145 protein CKO_02237 (107 aa).

Belongs to the UPF0145 family.

The protein is UPF0145 protein CKO_02237 of Citrobacter koseri (strain ATCC BAA-895 / CDC 4225-83 / SGSC4696).